Here is an 886-residue protein sequence, read N- to C-terminus: Pyruvate dehydrogenase E1 component (886 aa).

In terms of assembly, homodimer. Part of the PDH complex, consisting of multiple copies of pyruvate dehydrogenase (E1), dihydrolipoamide acetyltransferase (E2) and lipoamide dehydrogenase (E3). Requires thiamine diphosphate as cofactor.

The enzyme catalyses N(6)-[(R)-lipoyl]-L-lysyl-[protein] + pyruvate + H(+) = N(6)-[(R)-S(8)-acetyldihydrolipoyl]-L-lysyl-[protein] + CO2. Its function is as follows. Component of the pyruvate dehydrogenase (PDH) complex, that catalyzes the overall conversion of pyruvate to acetyl-CoA and CO(2). The sequence is that of Pyruvate dehydrogenase E1 component (aceE) from Haemophilus influenzae (strain ATCC 51907 / DSM 11121 / KW20 / Rd).